A 436-amino-acid polypeptide reads, in one-letter code: UPF0597 protein YhaM (436 aa).

It belongs to the UPF0597 family.

This Shigella sonnei (strain Ss046) protein is UPF0597 protein YhaM.